The following is a 360-amino-acid chain: Probable L-asparaginase 1 (360 aa).

The signal sequence occupies residues 1–16 (MWRSIISFLFFSVALC). Asn27, Asn35, and Asn40 each carry an N-linked (GlcNAc...) asparagine glycan. The Asparaginase/glutaminase domain maps to 39–359 (PNVTIFAMGG…QNITDIFSLE (321 aa)). Thr49 serves as the catalytic O-isoaspartyl threonine intermediate. The N-linked (GlcNAc...) asparagine glycan is linked to Asn82. Ser96 provides a ligand contact to substrate. N-linked (GlcNAc...) asparagine glycosylation occurs at Asn106. 129 to 130 (TD) serves as a coordination point for substrate. N-linked (GlcNAc...) asparagine glycans are attached at residues Asn144, Asn179, Asn246, Asn302, and Asn351.

Belongs to the asparaginase 1 family.

It is found in the secreted. The protein localises to the cell wall. The enzyme catalyses L-asparagine + H2O = L-aspartate + NH4(+). This is Probable L-asparaginase 1 from Schizosaccharomyces pombe (strain 972 / ATCC 24843) (Fission yeast).